The following is a 1747-amino-acid chain: Retroelement silencing factor 1 (1747 aa).

Lys-216 is covalently cross-linked (Glycyl lysine isopeptide (Lys-Gly) (interchain with G-Cter in SUMO2)). At Ser-221 the chain carries Phosphoserine. The segment covering 261-272 has biased composition (polar residues); it reads TSAVPSQQYATQ. The segment at 261–280 is disordered; it reads TSAVPSQQYATQTDKRPPPP. Residue Lys-707 forms a Glycyl lysine isopeptide (Lys-Gly) (interchain with G-Cter in SUMO2) linkage. Disordered stretches follow at residues 833-856, 923-956, and 1073-1101; these read PLTQ…NVNQ, PQKP…GFQK, and EGSV…KDPA. Over residues 842–856 the composition is skewed to polar residues; it reads ESTNGNSEVTPNVNQ. Over residues 937–956 the composition is skewed to basic and acidic residues; that stretch reads REPEKQLDNTTENKDFGFQK. The segment covering 1073–1087 has biased composition (polar residues); it reads EGSVGQQTTYQTSED. Over residues 1089–1101 the composition is skewed to basic and acidic residues; that stretch reads TADKTSSDSKDPA. Lys-1136 is covalently cross-linked (Glycyl lysine isopeptide (Lys-Gly) (interchain with G-Cter in SUMO2)). Ser-1145 carries the phosphoserine modification. Residues 1200–1274 are disordered; that stretch reads EEKQKEQCSP…KSLPRTEQEL (75 aa). Positions 1217-1226 are enriched in basic and acidic residues; it reads QGERTSDRDV. A Phosphothreonine modification is found at Thr-1240. Residues 1242–1261 are compositionally biased toward basic and acidic residues; sequence PDGKSHFPELQDDSRKDTPK. Phosphoserine is present on Ser-1358. Residues Lys-1528 and Lys-1636 each participate in a glycyl lysine isopeptide (Lys-Gly) (interchain with G-Cter in SUMO2) cross-link. Residues 1686 to 1716 are disordered; it reads KRTQKDSQERDNVNSRLSKRSFSADGFEMLQ. Over residues 1689 to 1698 the composition is skewed to basic and acidic residues; that stretch reads QKDSQERDNV. Ser-1708 carries the phosphoserine modification. Lys-1723 is covalently cross-linked (Glycyl lysine isopeptide (Lys-Gly) (interchain with G-Cter in SUMO2)). Ser-1740 is subject to Phosphoserine.

As to quaternary structure, interacts with SETDB1.

It localises to the nucleus. In terms of biological role, plays a role in the regulation of imprinted gene expression, regulates repressive epigenetic modifications associated with SETDB1. Required for the recruitment or accumulation of SETDB1 to the endogenous retroviruses (ERVs) and maintenance of repressive chromatin configuration, contributing to a subset of the SETDB1-dependent ERV silencing in embryonic stem cells. This Homo sapiens (Human) protein is Retroelement silencing factor 1.